The sequence spans 2256 residues: Death-inducer obliterator 1 (2256 aa).

Residue methionine 1 is modified to N-acetylmethionine. Over residues 1–25 (MDDKGHLSNEEAPKAIKPTSKEFRK) the composition is skewed to basic and acidic residues. The interval 1–256 (MDDKGHLSNE…NPREAGKPKP (256 aa)) is disordered. Polar residues-rich tracts occupy residues 48-59 (SEQQPQQHNLSL) and 96-119 (EPTS…SSEI). Serine 58 and serine 112 each carry phosphoserine. Basic and acidic residues predominate over residues 128–142 (LGKEHPASSEKAKGG). The span at 143–153 (EEEEDTSDSDS) shows a compositional bias: acidic residues. Threonine 148 is subject to Phosphothreonine. Phosphoserine is present on residues serine 149 and serine 151. 2 consecutive short sequence motifs (nuclear localization signal) follow at residues 162–170 (QNRLRRKRE) and 182–190 (QNRLRKKRR). Over residues 169–178 (REQEPVERSL) the composition is skewed to basic and acidic residues. 2 stretches are compositionally biased toward basic and acidic residues: residues 206–216 (EQDRPLCKQEP) and 246–256 (ENPREAGKPKP). The PHD-type zinc-finger motif lies at 265 to 319 (ALYCICRQPHNNRFMICCDRCEEWFHGDCVGISEARGRLLERNGEDYICPNCTIL). Disordered stretches follow at residues 481–535 (LASR…DDRR), 598–624 (RPWP…ASKK), 641–668 (ANVP…SQIR), 778–822 (SRTK…PEKS), 856–970 (QVPS…TALS), 1011–1039 (AKPS…PPEG), and 1197–1218 (PSSA…QEEL). Positions 495–506 (ESSTPSWASDHN) are enriched in polar residues. Position 522 is a phosphoserine (serine 522). The region spanning 667–787 (IRQNIRRSLK…SRTKLLNESK (121 aa)) is the TFIIS central domain. Residues 778–788 (SRTKLLNESKK) are compositionally biased toward basic and acidic residues. Residues 797–812 (PDMEDSPPVSDSEEQQ) are compositionally biased toward acidic residues. Phosphoserine is present on residues serine 802 and serine 806. Basic and acidic residues-rich tracts occupy residues 875–886 (SKKEDFKPRHDS) and 921–935 (QERK…DSHP). Lysine 876 is covalently cross-linked (Glycyl lysine isopeptide (Lys-Gly) (interchain with G-Cter in SUMO2)). Serine 886 carries the post-translational modification Phosphoserine. Positions 937–962 (PSSLGGLSPSSASGGSGVVTTVTMSG) are enriched in low complexity. Residues serine 1016, serine 1027, and serine 1035 each carry the phosphoserine modification. The segment covering 1202–1215 (ELDKTDEKRTRLQQ) has biased composition (basic and acidic residues). The residue at position 1239 (tyrosine 1239) is a Phosphotyrosine. A disordered region spans residues 1245–1288 (DTAATSTTPPGSPPPPPPLPEPPVLKILSSLKPGSTSTVTAPTT). At threonine 1252 the chain carries Phosphothreonine. Over residues 1254 to 1267 (PGSPPPPPPLPEPP) the composition is skewed to pro residues. Serine 1256 is modified (phosphoserine). Over residues 1279–1288 (STSTVTAPTT) the composition is skewed to low complexity. Serine 1307 bears the Phosphoserine mark. Disordered stretches follow at residues 1320-1347 (KKSF…KGED), 1362-1421 (FGQF…VAYD), 1509-1609 (SDAL…EAKE), and 1630-2256 (QKCE…AAQA). Positions 1371 to 1387 (LEEEEEDDRPYDPEEEY) are enriched in acidic residues. Position 1514 is a phosphoserine (serine 1514). Over residues 1526-1546 (LFSQEQQAPDPSQGAPNTNHN) the composition is skewed to polar residues. The segment covering 1547–1557 (LDSRQSRDPRQ) has biased composition (basic and acidic residues). The segment covering 1649-1666 (PTAGDGAARPAPPRRVLL) has biased composition (low complexity). The span at 1667–1679 (PTPPSTTFPPSFP) shows a compositional bias: pro residues. A compositionally biased stretch (polar residues) spans 1699–1712 (TFMSQETSLGSSQY). The residue at position 1726 (serine 1726) is a Phosphoserine. Over residues 1783–1792 (FPGPRGPVPP) the composition is skewed to pro residues. Residue arginine 1848 is modified to Omega-N-methylarginine. The segment covering 1855–1869 (FEDRKDPHGEKREFQ) has biased composition (basic and acidic residues). Asymmetric dimethylarginine occurs at positions 1904, 1905, 1988, 1993, 2004, 2019, and 2035. Composition is skewed to basic and acidic residues over residues 2081–2113 (EFRE…KPLD) and 2123–2246 (RQGR…EART).

Interacts specifically (via PHD-type zinc finger) with histone H3 that is trimethylated at 'Lys-4' (H3K4me3), histone phosphorylation at 'Thr-3' or 'Thr-6' disrupts this binding and promotes translocation of DIDO1 from chromatin to the mitotic spindle during mitosis. In terms of tissue distribution, ubiquitous. Expressed at intermediate levels.

It localises to the cytoplasm. The protein localises to the nucleus. Its subcellular location is the cytoskeleton. The protein resides in the spindle. Functionally, required for early embryonic stem cell development. Putative transcription factor, weakly pro-apoptotic when overexpressed. The chain is Death-inducer obliterator 1 (Dido1) from Mus musculus (Mouse).